Consider the following 523-residue polypeptide: MTNIHNHKILILDFGSQYTQLIARRVREIGVYCELWAWDVTEQQIREFAPTGIILSGSPESTTEENSPRAPEYVFNASVPVLGICYGMQTMAMQLGGLTETSDHREFGYASVSLENSTALFANLNDNSTASEPKLDVWMSHGDKVTRLPENFKVTGTTPTCPIAAMSDENRRFYGVQFHPEVTHTKKGLELLTNFVVNICGCETKWTAENIIEDAVARIKEQVGDDEVILGLSGGVDSSVVALLLHRAIGKNLHCVFVDNGLLRLHEGDQVMEMFGDKFGLNITRVDAESRFLGELAGVSDPEAKRKIIGKVFVDVFDDESKKLTNVKWLAQGTIYPDVIESAASKTGKAHVIKSHHNVGGLPDYMKLGLVEPLRELFKDEVRKIGLALGLPAEMINRHPFPGPGLGVRVLGEVKKEYCDLLRRADAIFIEELRNSGWYEKTSQAFSVFLPVKSVGVMGDGRKYDWVISLRAVETIDFMTAHWAHLPYDLLGKVSNRIINEVNGISRVVYDISGKPPATIEWE.

A Glutamine amidotransferase type-1 domain is found at 8–205 (KILILDFGSQ…VVNICGCETK (198 aa)). Catalysis depends on Cys-85, which acts as the Nucleophile. Catalysis depends on residues His-179 and Glu-181. The 193-residue stretch at 206–398 (WTAENIIEDA…LGLPAEMINR (193 aa)) folds into the GMPS ATP-PPase domain. 233–239 (SGGVDSS) provides a ligand contact to ATP.

In terms of assembly, homodimer.

It catalyses the reaction XMP + L-glutamine + ATP + H2O = GMP + L-glutamate + AMP + diphosphate + 2 H(+). Its pathway is purine metabolism; GMP biosynthesis; GMP from XMP (L-Gln route): step 1/1. Its function is as follows. Catalyzes the synthesis of GMP from XMP. This Haemophilus influenzae (strain 86-028NP) protein is GMP synthase [glutamine-hydrolyzing].